The sequence spans 633 residues: Probable potassium transport system protein Kup 2 (633 aa).

12 helical membrane passes run Phe-18 to Leu-38, Leu-61 to Leu-81, Leu-109 to Pro-129, Pro-145 to Val-165, Val-173 to Val-193, Ala-211 to Leu-231, Trp-255 to Leu-275, Leu-287 to Ile-307, Ile-345 to Phe-365, Leu-371 to Phe-391, Ala-405 to Phe-425, and Ile-427 to Thr-447.

Belongs to the HAK/KUP transporter (TC 2.A.72) family.

It localises to the cell inner membrane. It catalyses the reaction K(+)(in) + H(+)(in) = K(+)(out) + H(+)(out). Transport of potassium into the cell. Likely operates as a K(+):H(+) symporter. The protein is Probable potassium transport system protein Kup 2 of Sinorhizobium medicae (strain WSM419) (Ensifer medicae).